The following is a 56-amino-acid chain: Large ribosomal subunit protein bL32 (56 aa).

Positions 1-36 are disordered; sequence MAVQQNKKSRSKRGMRRSHDALSTAQLSVDATSGEV. Basic residues predominate over residues 7–16; it reads KKSRSKRGMR. The segment covering 21–31 has biased composition (polar residues); the sequence is ALSTAQLSVDA.

It belongs to the bacterial ribosomal protein bL32 family.

The polypeptide is Large ribosomal subunit protein bL32 (Shewanella oneidensis (strain ATCC 700550 / JCM 31522 / CIP 106686 / LMG 19005 / NCIMB 14063 / MR-1)).